Reading from the N-terminus, the 191-residue chain is Cell division protein SepF (191 aa).

Residues 156-167 (EEASPSNMSNKG) are compositionally biased toward polar residues. Residues 156 to 191 (EEASPSNMSNKGNDLISKETSPAPEPAWGETVATAL) form a disordered region.

The protein belongs to the SepF family. Homodimer. Interacts with FtsZ.

It localises to the cytoplasm. Its function is as follows. Cell division protein that is part of the divisome complex and is recruited early to the Z-ring. Probably stimulates Z-ring formation, perhaps through the cross-linking of FtsZ protofilaments. Its function overlaps with FtsA. The chain is Cell division protein SepF from Prochlorococcus marinus (strain NATL1A).